The sequence spans 185 residues: Capsid protein (185 aa).

Positions 136–185 are disordered; the sequence is NAPILSTLPETTVVRRRDRGRSPRRRTPSPRRRRSQSPRRRRSQSRESQC. Positions 149–178 are enriched in basic residues; it reads VRRRDRGRSPRRRTPSPRRRRSQSPRRRRS. 3 positions are modified to phosphoserine; by host: S157, S164, and S172. The 1; half-length repeat unit spans residues 157-163; it reads SPRRRTP. The tract at residues 157 to 179 is 3 X 8 AA repeats of S-P-R-R-R-[PR]-S-Q; sequence SPRRRTPSPRRRRSQSPRRRRSQ. Residues 160 to 177 carry the Bipartite nuclear localization signal motif; sequence RRTPSPRRRRSQSPRRRR. 2 tandem repeats follow at residues 164-171 and 172-179. The interval 179–185 is RNA binding; the sequence is QSRESQC.

Belongs to the orthohepadnavirus core antigen family. In terms of assembly, homodimerizes, then multimerizes. Interacts with cytosol exposed regions of viral L glycoprotein present in the reticulum-to-Golgi compartment. Interacts with human FLNB. Phosphorylated form interacts with host importin alpha; this interaction depends on the exposure of the NLS, which itself depends upon genome maturation and/or phosphorylation of the capsid protein. Interacts with host NUP153. Phosphorylated by host SRPK1, SRPK2, and maybe protein kinase C or GAPDH. Phosphorylation is critical for pregenomic RNA packaging. Protein kinase C phosphorylation is stimulated by HBx protein and may play a role in transport of the viral genome to the nucleus at the late step during the viral replication cycle.

It localises to the virion. The protein localises to the host cytoplasm. In terms of biological role, self assembles to form an icosahedral capsid. Most capsids appear to be large particles with an icosahedral symmetry of T=4 and consist of 240 copies of capsid protein, though a fraction forms smaller T=3 particles consisting of 180 capsid proteins. Entering capsids are transported along microtubules to the nucleus. Phosphorylation of the capsid is thought to induce exposure of nuclear localization signal in the C-terminal portion of the capsid protein that allows binding to the nuclear pore complex via the importin (karyopherin-) alpha and beta. Capsids are imported in intact form through the nuclear pore into the nuclear basket, where it probably binds NUP153. Only capsids that contain the mature viral genome can release the viral DNA and capsid protein into the nucleoplasm. Immature capsids get stuck in the basket. Capsids encapsulate the pre-genomic RNA and the P protein. Pre-genomic RNA is reverse-transcribed into DNA while the capsid is still in the cytoplasm. The capsid can then either be directed to the nucleus, providing more genomes for transcription, or bud through the endoplasmic reticulum to provide new virions. The polypeptide is Capsid protein (Hepatitis B virus genotype A1 subtype adw (isolate Philippines/pFDW294/1988) (HBV-A)).